A 245-amino-acid chain; its full sequence is 1-(5-phosphoribosyl)-5-[(5-phosphoribosylamino)methylideneamino] imidazole-4-carboxamide isomerase (245 aa).

The active-site Proton acceptor is Asp7. The active-site Proton donor is Asp129.

The protein belongs to the HisA/HisF family.

It is found in the cytoplasm. It carries out the reaction 1-(5-phospho-beta-D-ribosyl)-5-[(5-phospho-beta-D-ribosylamino)methylideneamino]imidazole-4-carboxamide = 5-[(5-phospho-1-deoxy-D-ribulos-1-ylimino)methylamino]-1-(5-phospho-beta-D-ribosyl)imidazole-4-carboxamide. It functions in the pathway amino-acid biosynthesis; L-histidine biosynthesis; L-histidine from 5-phospho-alpha-D-ribose 1-diphosphate: step 4/9. This chain is 1-(5-phosphoribosyl)-5-[(5-phosphoribosylamino)methylideneamino] imidazole-4-carboxamide isomerase, found in Escherichia coli (strain ATCC 8739 / DSM 1576 / NBRC 3972 / NCIMB 8545 / WDCM 00012 / Crooks).